The primary structure comprises 229 residues: tRNA (guanine-N(1)-)-methyltransferase (229 aa).

S-adenosyl-L-methionine-binding positions include Gly109 and 129–134 (IGDFIL).

The protein belongs to the RNA methyltransferase TrmD family. As to quaternary structure, homodimer.

It localises to the cytoplasm. The enzyme catalyses guanosine(37) in tRNA + S-adenosyl-L-methionine = N(1)-methylguanosine(37) in tRNA + S-adenosyl-L-homocysteine + H(+). Specifically methylates guanosine-37 in various tRNAs. This is tRNA (guanine-N(1)-)-methyltransferase from Helicobacter pylori (strain Shi470).